The sequence spans 558 residues: INCREASED PETAL GROWTH ANISOTROPY 1-like protein 2 (558 aa).

The segment covering 1-15 (MSRISTTSTTPSRVR) has biased composition (low complexity). The interval 1–54 (MSRISTTSTTPSRVRAANSHYSVISKPRAQDDNGLTGGKPKSSGYDVKNDPAKR) is disordered. Residues 104–180 (VMATAAAEDE…EAKISSLSSN (77 aa)) adopt a coiled-coil conformation. Residues 207 to 285 (KVKKEVAVES…AARAQKSPPV (79 aa)) form a disordered region. 2 stretches are compositionally biased toward pro residues: residues 221–236 (PPSP…PPLP) and 256–272 (FAPP…PPRP). A coiled-coil region spans residues 392-448 (KADTLQEAAVEYRELKKLEKELSSYSDDPNIHYGVALKKMANLLDKSEQRIRRLVRL).

Belongs to the IPGA1 family.

The protein resides in the cytoplasm. Its subcellular location is the cytoskeleton. Functionally, microtubule-associated protein probably involved in the regulation of microtubule organization. In Arabidopsis thaliana (Mouse-ear cress), this protein is INCREASED PETAL GROWTH ANISOTROPY 1-like protein 2.